A 347-amino-acid chain; its full sequence is Zinc-type alcohol dehydrogenase-like protein C16A3.02c (347 aa).

It belongs to the zinc-containing alcohol dehydrogenase family. Quinone oxidoreductase subfamily.

The protein resides in the golgi apparatus. The protein localises to the endoplasmic reticulum. The protein is Zinc-type alcohol dehydrogenase-like protein C16A3.02c of Schizosaccharomyces pombe (strain 972 / ATCC 24843) (Fission yeast).